The primary structure comprises 52 residues: Rubredoxin-2 (52 aa).

In terms of domain architecture, Rubredoxin-like spans Met1–Ile52. Positions 6, 9, 39, and 42 each coordinate Fe cation.

This sequence belongs to the rubredoxin family. In terms of assembly, monomer. Fe(3+) is required as a cofactor.

Functionally, serves as an electron acceptor for pyruvate ferredoxin oxidoreductase (PFOR). The chain is Rubredoxin-2 (rub2) from Chlorobaculum tepidum (strain ATCC 49652 / DSM 12025 / NBRC 103806 / TLS) (Chlorobium tepidum).